The chain runs to 4513 residues: Dynein-1-beta heavy chain, flagellar inner arm I1 complex (4513 aa).

The stem stretch occupies residues 1 to 1806 (MEPGDEGKGH…IVKQVLSVFY (1806 aa)). Coiled coils occupy residues 192-223 (KAAAKQKDLVQRLESTIIHWTRQVKELLNQQD), 1544-1577 (TAQGLLESFQDMNNKLERIQKSLDNYLENKRQQF), and 1704-1727 (THECEKALADADSARKNLKLLKKK). AAA stretches follow at residues 1807–2028 (YGYE…PIAR), 2089–2350 (RAIE…VPEN), 2458–2706 (FKPA…IIQG), and 2808–3059 (DYAL…LKRR). Residues 1845-1852 (GPAGTGKT), 2127-2134 (GRTGSGKS), 2497-2504 (GNVGVGKT), and 2848-2855 (GVGGSGRK) each bind ATP. 3 coiled-coil regions span residues 3107–3193 (AAMK…LTKK), 3301–3384 (KRAK…SISE), and 3499–3519 (RLKVLNLQMSDMARQIENAIQ). Residues 3107-3384 (AAMKKVAEEK…RVRWEASISE (278 aa)) form a stalk region. AAA regions lie at residues 3443–3674 (LANP…EVNA) and 3890–4109 (ATTY…LLKS).

As to quaternary structure, the I1 inner arm complex (also known as the f dynein complex) is a two-headed isoform composed of two heavy chains (1-alpha and 1-beta), three intermediate chains and three light chains. I1 occupies a specific position proximal to the first radial spoke and repeats every 96 nm along the length of the axoneme.

The protein resides in the cell projection. It localises to the cilium. It is found in the flagellum. The protein localises to the cytoplasm. Its subcellular location is the cytoskeleton. The protein resides in the flagellum axoneme. Its function is as follows. Force generating protein of eukaryotic cilia and flagella. Produces force towards the minus ends of microtubules. Dynein has ATPase activity; the force-producing power stroke is thought to occur on release of ADP. Required for assembly of the I1 inner arm complex and its targeting to the appropriate axoneme location. Also required for phototaxis. The polypeptide is Dynein-1-beta heavy chain, flagellar inner arm I1 complex (DHC10) (Chlamydomonas reinhardtii (Chlamydomonas smithii)).